Here is a 1264-residue protein sequence, read N- to C-terminus: TBC1 domain family member 9 (1264 aa).

GRAM domains are found at residues 146–213 (VKFH…EKNA) and 293–361 (ERYR…EKAD). Residues 410–456 (KEFSGSCNSSDDEVYSRPSSLVSSSPQRSTSSDADGERPFNLNGNSV) form a disordered region. The segment covering 425–441 (SRPSSLVSSSPQRSTSS) has biased composition (low complexity). Residues 515–702 (GIPESMRGEL…VVVDCFFYEG (188 aa)) form the Rab-GAP TBC domain. The EF-hand domain occupies 886-921 (HSDVLASRLFQLLDENGDSLINFREFVSGLSAACHG). A compositionally biased stretch (basic and acidic residues) spans 1119 to 1138 (SEEHSLGGQMEDIKLEDSSP). Residues 1119–1162 (SEEHSLGGQMEDIKLEDSSPRDNGACSSMLISDDDTKDDSSMSS) are disordered.

In terms of biological role, may act as a GTPase-activating protein for Rab family protein(s). The polypeptide is TBC1 domain family member 9 (Tbc1d9) (Mus musculus (Mouse)).